The chain runs to 573 residues: MRLLRPSWAGLLRGRHHQHQRHHRRLLLTTSRGSNGEREEQQHSQWSSPGSRSEQLFYAAFWAGGLTLGYHWLTDKKNHVLLEGQKVASEEELEATARLWHVTNRRELPTYRAEEVEQHNSVEKRIWVTYGLGVYDVTDFVENHPGGDKILMAAGSAIDPFWGIYQQHNTLEVLELLEGFRIGNLEGLVVTNVDDELGSPWSQEPQRHALLKPASKRPFNAEPPIGLLAEQFYTPNELFYVRNHLPVPVINPEDYELEIEGGAKDKTLTLDGIKALPKHSVTAAIMCGGNRRSEMTKVKAVKGLSWGAGAVGNAKWSGARLCDILREQGVQPDETKHVIFEGADLDPTSHPYGASIPLAKALDPRGDVILAYEMNDEPLSRDHGFPIRVIVPGTVGARNVKWLTRIVVADKESDSHWQQNDYKGFSPSTDWDTVDFSKSDAIQAMPVTSAICTPQPGARVKVDDDEGHITVRGYAWSGGGRKIVRVDLTNDEGVSWHVAELEQEEMPDGRHYGWSLWTARLPVSEAQRRAGDVEIWAKAVDSAYNVQPEKFEHIWNLRGVLANAYHKVKVKII.

The transit peptide at 1 to 34 (MRLLRPSWAGLLRGRHHQHQRHHRRLLLTTSRGS) directs the protein to the mitochondrion. The segment covering 14 to 26 (GRHHQHQRHHRRL) has biased composition (basic residues). Positions 14–50 (GRHHQHQRHHRRLLLTTSRGSNGEREEQQHSQWSSPG) are disordered. The region spanning 108 to 186 (LPTYRAEEVE…LEGFRIGNLE (79 aa)) is the Cytochrome b5 heme-binding domain. 2 residues coordinate heme b: His-144 and His-168. A hinge region spans residues 190 to 199 (VTNVDDELGS). A moco domain region spans residues 200-423 (PWSQEPQRHA…DSHWQQNDYK (224 aa)). Mo-molybdopterin is bound by residues 240–244 (YVRNH), Cys-287, Asp-344, His-383, Arg-388, and 399–401 (NVK). Positions 424-567 (GFSPSTDWDT…RGVLANAYHK (144 aa)) are homodimerization.

Requires heme b as cofactor. Mo-molybdopterin is required as a cofactor. In terms of tissue distribution, expressed in the ensheathing glia with relatively weak expression in the CNS cortex (at protein level).

The protein resides in the mitochondrion intermembrane space. It carries out the reaction sulfite + O2 + H2O = sulfate + H2O2. It participates in energy metabolism; sulfur metabolism. Required in ensheathing glial cells for normal larval locomotion. Oxidizes sulfite which is required to maintain glutamate homeostasis and as a consequence, neuronal network function. The protein is Sulfite oxidase, mitochondrial of Drosophila melanogaster (Fruit fly).